The chain runs to 364 residues: MPLVPPHVASLTPYVPGKPIEEVEREYGVSNVAKLASNENALGPSPLALAAAREACAKVHLYPDGSAYLLRNAIAAKLGVPPEEVMVGNGSNELIELLVRTFVLDGEEVLTSAQSFVAYKLAAHEHGRTLVEAPMKGRFHYDLDALRKLLSRRTKLVFLANPDNPTGTWFTEAELTPFLDAVPKDTLVVLDEAYVEYVDAPGFQDGLALRRKYPNVVVLRTFSKIYGLAGMRLGYGLARPEVVEYVDRVRPPFNTNLVAQAAGAAALGDSAHVAKSRALVLEERPFLAKGLAALGAIVVPSQGNFVLADFPGRTGKDLFEALLREGVIARPVAGYGFPSALRITVGLRRENERCLAALGRILGA.

Residue Lys224 is modified to N6-(pyridoxal phosphate)lysine.

Belongs to the class-II pyridoxal-phosphate-dependent aminotransferase family. Histidinol-phosphate aminotransferase subfamily. Homodimer. Pyridoxal 5'-phosphate is required as a cofactor.

The enzyme catalyses L-histidinol phosphate + 2-oxoglutarate = 3-(imidazol-4-yl)-2-oxopropyl phosphate + L-glutamate. The protein operates within amino-acid biosynthesis; L-histidine biosynthesis; L-histidine from 5-phospho-alpha-D-ribose 1-diphosphate: step 7/9. This Anaeromyxobacter sp. (strain Fw109-5) protein is Histidinol-phosphate aminotransferase.